A 106-amino-acid chain; its full sequence is MNDSEFHRLADQLWLTIEEHLDDWGGDSDIDCEINGGVLTITFENGSKIIINRQEPLHQVWLATKQGGYHFDLKGDEWICDRSGETFWDLLEQAATQQAGETVSFR.

It belongs to the frataxin family.

Its function is as follows. Involved in iron-sulfur (Fe-S) cluster assembly. May act as a regulator of Fe-S biogenesis. This chain is Iron-sulfur cluster assembly protein CyaY, found in Escherichia coli O6:H1 (strain CFT073 / ATCC 700928 / UPEC).